We begin with the raw amino-acid sequence, 367 residues long: Probable butyrate kinase (367 aa).

It belongs to the acetokinase family.

Its subcellular location is the cytoplasm. The enzyme catalyses butanoate + ATP = butanoyl phosphate + ADP. In Bacillus cereus (strain G9842), this protein is Probable butyrate kinase.